The sequence spans 178 residues: MQKPINENFFIAQIGRTVGLWGDLKLHLHTDFPEQFKVGNSYQSNRGELTISDINFKRGTIRFQGYESIDAAKKLTNTKLYADEAQTKEQCPLEEGQHFWFNVIGCTVNQGDELLGVVDDIQRLADVDYLSIKTDKALVDTGLPKNFLVPYIDRYVINTDEKSKIVHVKDAKDILEAS.

Positions 95-174 (EGQHFWFNVI…IVHVKDAKDI (80 aa)) constitute a PRC barrel domain.

This sequence belongs to the RimM family. As to quaternary structure, binds ribosomal protein uS19.

Its subcellular location is the cytoplasm. Its function is as follows. An accessory protein needed during the final step in the assembly of 30S ribosomal subunit, possibly for assembly of the head region. Essential for efficient processing of 16S rRNA. May be needed both before and after RbfA during the maturation of 16S rRNA. It has affinity for free ribosomal 30S subunits but not for 70S ribosomes. This Sulfurovum sp. (strain NBC37-1) protein is Ribosome maturation factor RimM.